Here is a 138-residue protein sequence, read N- to C-terminus: Large ribosomal subunit protein uL29 (138 aa).

The tract at residues 1 to 79 (MAKSKMLDLR…TNKVIKADYN (79 aa)) is large ribosomal subunit protein uL29. Residues 80–138 (KAVEEAEKAGKEVRAKQRKFLEEQYGQQSQTKVNEADIQKAMQAAEQETVEPDTKGETK) form a unknown region. A disordered region spans residues 103 to 138 (QYGQQSQTKVNEADIQKAMQAAEQETVEPDTKGETK).

It belongs to the universal ribosomal protein uL29 family.

The protein is Large ribosomal subunit protein uL29 of Mycoplasma capricolum subsp. capricolum (strain California kid / ATCC 27343 / NCTC 10154).